A 144-amino-acid chain; its full sequence is MNLNELQPAAGSRHVRNRVGRGTSSGNGKTSGRGQKGQKARGKVRLGFEGGQMPLYRRIPKRGFTNISRKEFAVVNLNKLNSFDDGTEITPTLLIENGIVKNQKSGIKILAVGQLEKKLTVKAHKFSAAAVAAIEQAGGSTEVL.

Positions 1–44 (MNLNELQPAAGSRHVRNRVGRGTSSGNGKTSGRGQKGQKARGKV) are disordered. Over residues 23–35 (TSSGNGKTSGRGQ) the composition is skewed to gly residues.

It belongs to the universal ribosomal protein uL15 family. In terms of assembly, part of the 50S ribosomal subunit.

In terms of biological role, binds to the 23S rRNA. The chain is Large ribosomal subunit protein uL15 from Leuconostoc mesenteroides subsp. mesenteroides (strain ATCC 8293 / DSM 20343 / BCRC 11652 / CCM 1803 / JCM 6124 / NCDO 523 / NBRC 100496 / NCIMB 8023 / NCTC 12954 / NRRL B-1118 / 37Y).